Reading from the N-terminus, the 232-residue chain is Chaperone protein CssC (232 aa).

The N-terminal stretch at 1-20 is a signal peptide; it reads MKSKLIILLMLVPFSSFSTE.

This sequence belongs to the periplasmic pilus chaperone family.

Its subcellular location is the periplasm. Involved in the biogenesis of the CS6 fimbria. The sequence is that of Chaperone protein CssC (cssC) from Escherichia coli.